The sequence spans 631 residues: ATP-dependent RNA helicase mrh4, mitochondrial (631 aa).

The transit peptide at 1–45 directs the protein to the mitochondrion; it reads MNRLGRLPLPLPPSVCLFCQSRATTPLPPSLQATRSMATARLRRR. The segment at 68 to 111 is disordered; that stretch reads KERFGPFAGMNQTEARIRDKPRTRSRAAQKRSGEPEEDSQKESP. Positions 98–108 are enriched in basic and acidic residues; that stretch reads RSGEPEEDSQK. The Q motif signature appears at 141–174; that stretch reads TSFDQFQLLPVVRNSISSQALPGLVDVTPTPIQR. A compositionally biased stretch (basic and acidic residues) spans 180-193; it reads LLEEPKTEKKPTKA. Positions 180 to 199 are disordered; the sequence is LLEEPKTEKKPTKADDDEPQ. The 213-residue stretch at 194–406 folds into the Helicase ATP-binding domain; sequence DDDEPQYDQY…RKRYPDIKRL (213 aa). 207–214 is an ATP binding site; sequence AETGSGKT. Residues 229–249 are disordered; sequence EARDKELEKKEQEEKAREREE. A DEAD box motif is present at residues 353–356; sequence DEAD. In terms of domain architecture, Helicase C-terminal spans 455–631; the sequence is GPYASYVAPK…EGMFRGQALI (177 aa).

Belongs to the DEAD box helicase family. MRH4 subfamily.

It localises to the mitochondrion. It catalyses the reaction ATP + H2O = ADP + phosphate + H(+). ATP-binding RNA helicase involved in mitochondrial RNA metabolism. Required for maintenance of mitochondrial DNA. The chain is ATP-dependent RNA helicase mrh4, mitochondrial (mrh4) from Neosartorya fischeri (strain ATCC 1020 / DSM 3700 / CBS 544.65 / FGSC A1164 / JCM 1740 / NRRL 181 / WB 181) (Aspergillus fischerianus).